A 345-amino-acid chain; its full sequence is GTP 3',8-cyclase (345 aa).

In terms of domain architecture, Radical SAM core spans 10–236 (SHGRPLGVLR…QCVSSHWPLD (227 aa)). Arg19 is a GTP binding site. 2 residues coordinate [4Fe-4S] cluster: Cys26 and Cys30. Tyr32 lines the S-adenosyl-L-methionine pocket. Cys33 serves as a coordination point for [4Fe-4S] cluster. Arg65 contributes to the GTP binding site. Gly69 serves as a coordination point for S-adenosyl-L-methionine. Thr98 provides a ligand contact to GTP. Ser123 serves as a coordination point for S-adenosyl-L-methionine. GTP is bound at residue Lys172. Residue Met206 participates in S-adenosyl-L-methionine binding. Positions 269 and 272 each coordinate [4Fe-4S] cluster. 274–276 (RIR) lines the GTP pocket. [4Fe-4S] cluster is bound at residue Cys286.

The protein belongs to the radical SAM superfamily. MoaA family. Monomer and homodimer. [4Fe-4S] cluster serves as cofactor.

The enzyme catalyses GTP + AH2 + S-adenosyl-L-methionine = (8S)-3',8-cyclo-7,8-dihydroguanosine 5'-triphosphate + 5'-deoxyadenosine + L-methionine + A + H(+). Its pathway is cofactor biosynthesis; molybdopterin biosynthesis. In terms of biological role, catalyzes the cyclization of GTP to (8S)-3',8-cyclo-7,8-dihydroguanosine 5'-triphosphate. This Synechococcus sp. (strain CC9902) protein is GTP 3',8-cyclase.